Consider the following 400-residue polypeptide: MKKITTIFVVLLMTVALFSIGNTTAADNDSVVEEHGQLSISNGELVNERGEQVQLKGMSSHGLQWYGQFVNYESMKWLRDDWGINVFRAAMYTSSGGYIDDPSVKEKVKEAVEAAIDLDIYVIIDWHILSDNDPNIYKEEAKDFFDEMSELYGDYPNVIYEIANEPNGSDVTWGNQIKPYAEEVIPIIRNNDPNNIIIVGTGTWSQDVHHAADNQLADPNVMYAFHFYAGTHGQNLRDQVDYALDQGAAIFVSEWGTSAATGDGGVFLDEAQVWIDFMDERNLSWANWSLTHKDESSAALMPGANPTGGWTEAELSPSGTFVREKIRESASIPPSDPTPPSDPGEPDPTPPSDPGEYPAWDPNQIYTNEIVYHNGQLWQAKWWTQNQEPGDPYGPWEPLN.

Residues 1–26 (MKKITTIFVVLLMTVALFSIGNTTAA) form the signal peptide. Residues histidine 61, 65-66 (WY), tyrosine 92, and histidine 127 each bind substrate. Residue glutamate 165 is the Proton donor of the active site. Tyrosine 228 is a substrate binding site. The Nucleophile role is filled by glutamate 254. Substrate-binding positions include 260–261 (AT), tryptophan 288, and 293–295 (KDE). Positions 328 to 363 (ESASIPPSDPTPPSDPGEPDPTPPSDPGEYPAWDPN) are disordered. Residues 334 to 353 (PSDPTPPSDPGEPDPTPPSD) are compositionally biased toward pro residues. The Chitin-binding type-3 domain occupies 357-396 (YPAWDPNQIYTNEIVYHNGQLWQAKWWTQNQEPGDPYGPW).

It belongs to the glycosyl hydrolase 5 (cellulase A) family. Monomer.

The protein localises to the secreted. It catalyses the reaction Endohydrolysis of (1-&gt;4)-beta-D-glucosidic linkages in cellulose, lichenin and cereal beta-D-glucans.. The sequence is that of Endoglucanase 5A (cel5A) from Salipaludibacillus agaradhaerens (Bacillus agaradhaerens).